A 324-amino-acid polypeptide reads, in one-letter code: Putative HTH-type transcriptional regulatory protein UNCMA_15260 (324 aa).

One can recognise an HTH cro/C1-type domain in the interval 132-189 (LRSLREAKNISLGELAMALGVSRRTISKYESGMNATIEAALKLEEILDAPIACPVNMI). The H-T-H motif DNA-binding region spans 143–162 (LGELAMALGVSRRTISKYES).

This Methanocella arvoryzae (strain DSM 22066 / NBRC 105507 / MRE50) protein is Putative HTH-type transcriptional regulatory protein UNCMA_15260.